Consider the following 351-residue polypeptide: N-acetyl-gamma-glutamyl-phosphate reductase (351 aa).

Residue Cys-154 is part of the active site.

The protein belongs to the NAGSA dehydrogenase family. Type 1 subfamily.

It is found in the cytoplasm. It carries out the reaction N-acetyl-L-glutamate 5-semialdehyde + phosphate + NADP(+) = N-acetyl-L-glutamyl 5-phosphate + NADPH + H(+). It participates in amino-acid biosynthesis; L-arginine biosynthesis; N(2)-acetyl-L-ornithine from L-glutamate: step 3/4. Functionally, catalyzes the NADPH-dependent reduction of N-acetyl-5-glutamyl phosphate to yield N-acetyl-L-glutamate 5-semialdehyde. In Prochlorococcus marinus (strain MIT 9301), this protein is N-acetyl-gamma-glutamyl-phosphate reductase.